A 186-amino-acid chain; its full sequence is UPF0301 protein Saro_0683 (186 aa).

This sequence belongs to the UPF0301 (AlgH) family.

The protein is UPF0301 protein Saro_0683 of Novosphingobium aromaticivorans (strain ATCC 700278 / DSM 12444 / CCUG 56034 / CIP 105152 / NBRC 16084 / F199).